A 407-amino-acid chain; its full sequence is E3 ubiquitin-protein ligase IE2 (407 aa).

Positions 1–10 (MSRQINAATP) are enriched in polar residues. A disordered region spans residues 1–69 (MSRQINAATP…RVSEENVQII (69 aa)). A compositionally biased stretch (basic residues) spans 13-25 (SRHHRLSLSRRRI). Low complexity predominate over residues 31-47 (SEAQPSSSSRSQTSSSS). The stretch at 127 to 158 (QQYQNNIASETAAQRALQRALDLEAQLMNEIA) forms a coiled coil. The interval 179 to 200 (QSPDLFASPQSSEQQQQSEPEE) is disordered. Low complexity predominate over residues 186–196 (SPQSSEQQQQS). The segment at 206–254 (CNICFTTFKDTKNVNSSFVTTTHCNHAVCFKCYVKIIMANSVYKCFCSA) adopts an RING-type; degenerate zinc-finger fold. The stretch at 336–393 (LKHKHAVAELDLQKANYDLQESTKKSEELQSTVNNLQEQLNKQVVESQAKFLEFERNN) forms a coiled coil.

It belongs to the alphabaculovirus IE2 protein family. In terms of assembly, homooligomer. In terms of processing, auto-ubiquitinated.

Its subcellular location is the host nucleus. It catalyses the reaction S-ubiquitinyl-[E2 ubiquitin-conjugating enzyme]-L-cysteine + [acceptor protein]-L-lysine = [E2 ubiquitin-conjugating enzyme]-L-cysteine + N(6)-ubiquitinyl-[acceptor protein]-L-lysine.. Functionally, RING-finger E3 ubiquitin ligase that plays an important regulatory role during the initial stages of infection. Migrates to specific nuclear foci early in infection supposely to prepare the sites for viral replication by targeting and ubiquitinating host proteins. This Rachiplusia ou multiple nucleopolyhedrovirus (strain R1) (RoMNPV) protein is E3 ubiquitin-protein ligase IE2 (IE2).